Here is a 513-residue protein sequence, read N- to C-terminus: Calcium-dependent protein kinase 2 (513 aa).

Positions 65–323 (YSFGKELGRG…SAQVLQHQWL (259 aa)) constitute a Protein kinase domain. Residues 71 to 79 (LGRGQFGVT) and lysine 94 each bind ATP. Aspartate 189 (proton acceptor) is an active-site residue. Residues 329-359 (ASDKPIDSAVLSRMKQFRAMNKLKKMALKVI) are autoinhibitory domain. EF-hand domains are found at residues 366-401 (EEIK…LGSK), 402-437 (LSEA…RHKL), 438-473 (ERDE…HEMG), and 478-508 (IREI…GMQQ). Ca(2+) contacts are provided by aspartate 379, aspartate 381, serine 383, threonine 385, glutamate 390, aspartate 415, aspartate 417, asparagine 419, serine 421, glutamate 426, aspartate 451, aspartate 453, serine 455, glutamate 462, aspartate 486, aspartate 488, aspartate 490, arginine 492, and glutamate 497.

It belongs to the protein kinase superfamily. Ser/Thr protein kinase family. CDPK subfamily.

The enzyme catalyses L-seryl-[protein] + ATP = O-phospho-L-seryl-[protein] + ADP + H(+). The catalysed reaction is L-threonyl-[protein] + ATP = O-phospho-L-threonyl-[protein] + ADP + H(+). Its activity is regulated as follows. Activated by calcium. Autophosphorylation may play an important role in the regulation of the kinase activity. In terms of biological role, may play a role in signal transduction pathways that involve calcium as a second messenger. This is Calcium-dependent protein kinase 2 (CPK2) from Zea mays (Maize).